Consider the following 128-residue polypeptide: Sulfurtransferase TusD (128 aa).

Cys-78 serves as the catalytic Cysteine persulfide intermediate.

This sequence belongs to the DsrE/TusD family. As to quaternary structure, heterohexamer, formed by a dimer of trimers. The hexameric TusBCD complex contains 2 copies each of TusB, TusC and TusD. The TusBCD complex interacts with TusE.

The protein localises to the cytoplasm. Part of a sulfur-relay system required for 2-thiolation of 5-methylaminomethyl-2-thiouridine (mnm(5)s(2)U) at tRNA wobble positions. Accepts sulfur from TusA and transfers it in turn to TusE. The chain is Sulfurtransferase TusD from Escherichia coli O45:K1 (strain S88 / ExPEC).